The following is a 270-amino-acid chain: Proteasome inhibitor PI31 subunit (270 aa).

A2 is subject to N-acetylalanine. The important for homodimerization and interaction with FBXO7 stretch occupies residues 2 to 150 (AGLEVLFASA…PIHEQWEKAN (149 aa)). S152 is subject to Phosphoserine. R204 is subject to Omega-N-methylarginine. R218 is subject to Asymmetric dimethylarginine. The interval 220 to 270 (LIDPSSGLPNRLPPGAVPPGARFDPFGPIGTSPSGPNPDHLPPPGYDDMYL) is disordered. R230 bears the Omega-N-methylarginine mark. S251 carries the post-translational modification Phosphoserine. Residues 254 to 264 (GPNPDHLPPPG) are compositionally biased toward pro residues.

Belongs to the proteasome inhibitor PI31 family. In terms of assembly, monomer and homodimer. Interacts with FBXO7.

The protein localises to the cytoplasm. Its subcellular location is the endoplasmic reticulum. Its function is as follows. Plays an important role in control of proteasome function. Inhibits the hydrolysis of protein and peptide substrates by the 20S proteasome. Also inhibits the activation of the proteasome by the proteasome regulatory proteins PA700 and PA28. This is Proteasome inhibitor PI31 subunit (PSMF1) from Bos taurus (Bovine).